We begin with the raw amino-acid sequence, 742 residues long: MVTIQPDASEYGGQTVTGAAWPNIDESVLASAASDLEAVANHLRDNVVPSAGRQKMKLADSWEGKGADSALDEANAIIGEHEQNEVEAREAAAKLRRMEFAVAVAKTLANQTAEQVQNDCQRIMDEGQPSEGEDTRFERVATRIREGYDDNVRMVAEVSHQLAADLGIVPPEPWGHPGSPARTPQTPDQHPDGQLGTVDSGSSAPAPPPSLFAPPPPSRNADRPSQLGTEVAAKAEPTPSLETVQSGSPVPPDPLVGGEAPARSNPPFAQPHSDAPSTSGASTPPAVGPAPAPTTGSGTMRPQAPAQALPPGHLDSLSPATSNEISSNAVSPSAFGAKSGTPLEQFQKGLADAAKTGGSPQTLSTAPSQPLGAPPTTQPLGAAPPTAGPAAPPTTGGPPAPVAQAAGGPGGGAGPAPVAPPLSGGVPGGAVPLGPPPTPPPAAPVTTPPLASGAPVAPTGAAAGAAGGGGAQVAPIPVSAARAERDLAQRAVRRSGVDPMETARRIAAALNAPGMTNVEDFKFFWVTGLTADGKIVVANNYGIAYIPQQVHLPEQVYMASADESISPAERASWVNEPIVAVQRWAEHNGRVLRAVIATEDQLKNSDAGVHHEVLRPEDIPENGKMAGRDRLQVIAPDVSSQLAKIGDADLVSVLPPAPADSNPPEDRRKSLWDNVWKPLASRSAKRGERHLTAFVAYAAHAQEHALYAAHTAALPDEQRQAIREFIYWQHVGQLTADALAPA.

Positions 167 to 471 (GIVPPEPWGH…AAGAAGGGGA (305 aa)) are disordered. Over residues 205–218 (PAPPPSLFAPPPPS) the composition is skewed to pro residues. Polar residues-rich tracts occupy residues 318 to 331 (SPAT…NAVS) and 358 to 368 (GSPQTLSTAPS). The span at 386–401 (TAGPAAPPTTGGPPAP) shows a compositional bias: pro residues. Over residues 421–432 (PLSGGVPGGAVP) the composition is skewed to low complexity. The span at 433–447 (LGPPPTPPPAAPVTT) shows a compositional bias: pro residues. Over residues 448-464 (PPLASGAPVAPTGAAAG) the composition is skewed to low complexity.

Its function is as follows. May be involved in the ESX-1 / type VII specialized secretion system (T7SS), which exports several proteins including EsxA and EsxB. Involved in DNA conjugation in the recipient strain. This is an uncharacterized protein from Mycolicibacterium smegmatis (strain MKD8) (Mycobacterium smegmatis).